We begin with the raw amino-acid sequence, 167 residues long: Mediator of RNA polymerase II transcription subunit 10 (167 aa).

Over residues 141–158 (TGGRTVGGEGEGAGQGEG) the composition is skewed to gly residues. The tract at residues 141–167 (TGGRTVGGEGEGAGQGEGGEGRGEGGN) is disordered.

Belongs to the Mediator complex subunit 10 family. Component of the Mediator complex.

Its subcellular location is the nucleus. In terms of biological role, component of the Mediator complex, a coactivator involved in the regulated transcription of nearly all RNA polymerase II-dependent genes. Mediator functions as a bridge to convey information from gene-specific regulatory proteins to the basal RNA polymerase II transcription machinery. Mediator is recruited to promoters by direct interactions with regulatory proteins and serves as a scaffold for the assembly of a functional preinitiation complex with RNA polymerase II and the general transcription factors. In Chaetomium globosum (strain ATCC 6205 / CBS 148.51 / DSM 1962 / NBRC 6347 / NRRL 1970) (Soil fungus), this protein is Mediator of RNA polymerase II transcription subunit 10 (NUT2).